Reading from the N-terminus, the 319-residue chain is R-phycoerythrin gamma chain, chloroplastic (319 aa).

The transit peptide at 1–71 (MDSPAFAVTG…RPKKLASYKR (71 aa)) directs the protein to the chloroplast. Cysteine 96 and cysteine 135 together coordinate phycourobilin. Cysteine 212 serves as a coordination point for (2R,3E)-phycoerythrobilin. Residue cysteine 299 participates in phycourobilin binding.

As to quaternary structure, heteromer of 4 alpha, 4 beta and one gamma chains. Contains four covalently linked bilin chromophores.

Its subcellular location is the plastid. It is found in the chloroplast thylakoid membrane. This Corallina officinalis (Coral seaweed) protein is R-phycoerythrin gamma chain, chloroplastic.